Reading from the N-terminus, the 122-residue chain is Large ribosomal subunit protein bL12 (122 aa).

It belongs to the bacterial ribosomal protein bL12 family. As to quaternary structure, homodimer. Part of the ribosomal stalk of the 50S ribosomal subunit. Forms a multimeric L10(L12)X complex, where L10 forms an elongated spine to which 2 to 4 L12 dimers bind in a sequential fashion. Binds GTP-bound translation factors.

In terms of biological role, forms part of the ribosomal stalk which helps the ribosome interact with GTP-bound translation factors. Is thus essential for accurate translation. The protein is Large ribosomal subunit protein bL12 of Shewanella putrefaciens (strain CN-32 / ATCC BAA-453).